Consider the following 208-residue polypeptide: Imidazoleglycerol-phosphate dehydratase (208 aa).

This sequence belongs to the imidazoleglycerol-phosphate dehydratase family.

Its subcellular location is the cytoplasm. It catalyses the reaction D-erythro-1-(imidazol-4-yl)glycerol 3-phosphate = 3-(imidazol-4-yl)-2-oxopropyl phosphate + H2O. Its pathway is amino-acid biosynthesis; L-histidine biosynthesis; L-histidine from 5-phospho-alpha-D-ribose 1-diphosphate: step 6/9. This chain is Imidazoleglycerol-phosphate dehydratase, found in Arthrobacter sp. (strain FB24).